We begin with the raw amino-acid sequence, 263 residues long: Post-GPI attachment to proteins factor 2 (263 aa).

Helical transmembrane passes span 16–36 (FVFCIGGLPSSALLICVLLSL), 69–89 (YIWRILIGLHIGPRLVVAVAF), 109–129 (FLCNIACGLNLLENFFLLALT), 143–163 (CFGGFAISSIIYMILSTWLFS), 180–200 (YKILGASIFVVCFFLGGYLYW), and 208–228 (PGIYTLFALVEYSAVLSNIFF).

This sequence belongs to the PGAP2 family.

The protein resides in the golgi apparatus membrane. Its subcellular location is the endoplasmic reticulum membrane. Its function is as follows. Involved in the lipid remodeling steps of GPI-anchor maturation. Required for stable expression of GPI-anchored proteins at the cell surface. The polypeptide is Post-GPI attachment to proteins factor 2 (Caenorhabditis briggsae).